The following is a 506-amino-acid chain: Histidine ammonia-lyase (506 aa).

Residues 143 to 145 (ASG) constitute a cross-link (5-imidazolinone (Ala-Gly)). Residue S144 is modified to 2,3-didehydroalanine (Ser).

The protein belongs to the PAL/histidase family. In terms of processing, contains an active site 4-methylidene-imidazol-5-one (MIO), which is formed autocatalytically by cyclization and dehydration of residues Ala-Ser-Gly.

The protein localises to the cytoplasm. The enzyme catalyses L-histidine = trans-urocanate + NH4(+). It functions in the pathway amino-acid degradation; L-histidine degradation into L-glutamate; N-formimidoyl-L-glutamate from L-histidine: step 1/3. The sequence is that of Histidine ammonia-lyase from Salmonella paratyphi C (strain RKS4594).